The sequence spans 168 residues: RNA annealing protein YRA2 (168 aa).

The region spanning 40 to 114 (FRLKITNIGL…KSIQVTLLDQ (75 aa)) is the RRM domain. The interval 113–152 (DQQKRKRDADQERRKLRHGPRGGYGSHYTKSQKPIEQRNK) is disordered.

Belongs to the YRA1 family. As to quaternary structure, associates with mRNPs.

The protein localises to the nucleus. Its function is as follows. Involved in export of poly(A) mRNAs from the nucleus. Recruited to the coding sequences as well as poly-A sites of active genes. In Candida glabrata (strain ATCC 2001 / BCRC 20586 / JCM 3761 / NBRC 0622 / NRRL Y-65 / CBS 138) (Yeast), this protein is RNA annealing protein YRA2 (YRA2).